A 447-amino-acid polypeptide reads, in one-letter code: N-succinylarginine dihydrolase (447 aa).

Substrate contacts are provided by residues 19-28, N110, and 137-138; these read AGLSFGNEAS and HR. E174 is a catalytic residue. R212 lines the substrate pocket. The active site involves H248. Residues D250 and N359 each contribute to the substrate site. The active-site Nucleophile is the C365.

It belongs to the succinylarginine dihydrolase family. Homodimer.

The catalysed reaction is N(2)-succinyl-L-arginine + 2 H2O + 2 H(+) = N(2)-succinyl-L-ornithine + 2 NH4(+) + CO2. It functions in the pathway amino-acid degradation; L-arginine degradation via AST pathway; L-glutamate and succinate from L-arginine: step 2/5. Functionally, catalyzes the hydrolysis of N(2)-succinylarginine into N(2)-succinylornithine, ammonia and CO(2). This is N-succinylarginine dihydrolase from Salmonella paratyphi A (strain ATCC 9150 / SARB42).